Consider the following 44-residue polypeptide: Diuretic hormone (44 aa).

The residue at position 44 (valine 44) is a Valine amide.

It is found in the secreted. Its function is as follows. Regulation of fluid secretion. Stimulates primary urine secretion by Malpighian tubules and causes a dose-dependent stimulation of cAMP levels in the tubules. May act as clearance peptide in that it may remove metabolic waste from the hemolymph. The protein is Diuretic hormone of Stomoxys calcitrans (Stable fly).